The following is a 94-amino-acid chain: Large ribosomal subunit protein bL27 (94 aa).

Positions 1–9 (MLKLNLQFF) are excised as a propeptide. A disordered region spans residues 13 to 32 (KGLGSTKNGRDSESKRLGAK). Residues 20–32 (NGRDSESKRLGAK) are compositionally biased toward basic and acidic residues.

It belongs to the bacterial ribosomal protein bL27 family. The N-terminus is cleaved by ribosomal processing cysteine protease Prp.

The sequence is that of Large ribosomal subunit protein bL27 from Staphylococcus saprophyticus subsp. saprophyticus (strain ATCC 15305 / DSM 20229 / NCIMB 8711 / NCTC 7292 / S-41).